The sequence spans 154 residues: Ribonuclease 8 (154 aa).

Residues 1 to 27 (MAPARAGCCPLLLLLLGLWVAEVLVRA) form the signal peptide. The Proton acceptor role is filled by His42. 4 disulfides stabilise this stretch: Cys50-Cys93, Cys64-Cys118, Cys82-Cys133, and Cys89-Cys96. Residues 65–69 (KDLNT) and Lys90 each bind substrate. His149 functions as the Proton donor in the catalytic mechanism.

The protein belongs to the pancreatic ribonuclease family. In terms of tissue distribution, expressed prominently in the placenta and is not detected in any other tissues examined.

It localises to the secreted. Its function is as follows. Has a low ribonuclease activity. The protein is Ribonuclease 8 (RNASE8) of Homo sapiens (Human).